The sequence spans 1342 residues: MSLSPHVENASIPKGSTPIPKNRNVSSIGKGEFLGSSSSNNSSFRMNHYSNSGQPSVLDSIRRPNLTPTFSYSNGVYMPESHRTSSFNDSYLPYDKNPYAKTTGSMSNKSNMKIKTKKNAINTNTRKSSGLIYTTKVDKELSSIDKVNDPNINGLVCAGKTHLGLYKFSPSDRSIKCVHDFITPNSNTSTRGTTSLLPKLSKRTRQNKFSTIADVKTGFNNYKNCIAVCNNSTAISIYDLNKSSSIDNPLITSLCEHTRSINSFDFNMVESNLIISGGQDSCVKIWDLRSNKSKSSNRSDISINTASDSIRDVKWMPGYNFASKNDQGSSTYGNLKSGYKFASIHDSGYLLKFDLRQPAQYEKKLNAHTGPGLCLNWHPNQEYIATGGRDGKCCLWFVGDNANAAENTVLNYGNSPSLHAPNTSLNNSGSLAFPKLTINTGYPVTKLKFKPAYSSNIYNSLLGISSMGDEAEVRIYSLARKYIPKHVLLSETPSLGLVWWDENLIFNIDKGTRINGWDINKEPTVLENLSKNTTTWRDLDGNGLLSVDQEIGSYEVVEPELQPTSSTTCKKHPGTIKNPKNGNPENQGIIGGIKKGFSHTGLTSFTPERPPTLKAGPTFSSKSLTLASGASSFNSSSASLTSLTPQTENREEIAIEPPCIITLDIPQIFNNIRLTKIAHSRKKNVISESSSMKNSPVEKFKYLARQLKFSYIREHNVSDSADTAYKNDIENIDVVKNATETHGDNTTTTNNNDDGDDDDDDDDDDDKIIESHLLKKYNFPENNTWATLMNEKVNNKKSKRNSSSSREFDEKDVRSSISSISASRQSHDRSRKIDKNVEAELQEKIQTLVDLISIATHNASVYLSIDDLTNFKIWILIRDSLLWDLKWMTSSQISSDNASNMDANESSDFEAGENLKTGKEFPEEDGAGTSGAESLVEERPQAFRANSDEPSDAEKKPVSKLKEQLKNTEIIPYAQPNEDSDEVLTKLKELQNQRLESRTKMGETVSDDVIIEEDEHEHQEEEQPHDSPTKSAQFHASPIAKSIPILQKREHRKSFIDTFMLHSPNGYNGDTDIGNEDDNISPRFTYNSVSPRSKVSSLQSYATTTSQLETFKKLSSHTAPIIGSPRHAPSRPDSIGREQLSSSLTKKLAKCKKIIADPPWDTKKLIKQLYNQATETGNVVLTVNILFLFQTIYQITEIDIAKDAIAHFLLLLHRYELFGIAADVLKYCPFEDIMGSEGDQSSIRLFCERCGELITNESSKEKLRAEAQQTGNKKIMDKFGYWYCDSCKKKNTSCVLCERPLKKLTMVILPCGHEGHFQCIQEWFLDENEQECPGGCPGVAFI.

The interval 1 to 39 (MSLSPHVENASIPKGSTPIPKNRNVSSIGKGEFLGSSSS) is disordered. 6 WD repeats span residues 207-248 (NKFS…SIDN), 256-296 (EHTR…SKSS), 305-342 (TASDSIRDVKWMPGYNFASKNDQGSSTYGNLKSGYKFA), 367-406 (AHTGPGLCLNWHPNQEYIATGGRDGKCCLWFVGDNANAAE), 439-486 (NTGY…IPKH), and 489-527 (LSETPSLGLVWWDENLIFNIDKGTRINGWDINKEPTVLE). Disordered stretches follow at residues 559–593 (PELQPTSSTTCKKHPGTIKNPKNGNPENQGIIGGI), 600–619 (TGLTSFTPERPPTLKAGPTF), 630–651 (ASSFNSSSASLTSLTPQTENRE), 736–766 (KNATETHGDNTTTTNNNDDGDDDDDDDDDDD), and 788–831 (LMNE…DRSR). Low complexity predominate over residues 630–644 (ASSFNSSSASLTSLT). A compositionally biased stretch (acidic residues) spans 753–766 (DDGDDDDDDDDDDD). The span at 815–824 (SSISSISASR) shows a compositional bias: low complexity. One copy of the WD 7 repeat lies at 844–884 (KIQTLVDLISIATHNASVYLSIDDLTNFKIWILIRDSLLWD). 2 disordered regions span residues 942–963 (AFRANSDEPSDAEKKPVSKLKE) and 1014–1047 (DEHEHQEEEQPHDSPTKSAQFHASPIAKSIPILQ). Basic and acidic residues-rich tracts occupy residues 952 to 963 (DAEKKPVSKLKE) and 1016 to 1028 (HEHQEEEQPHDSP). Phosphoserine is present on residues serine 1037, serine 1081, serine 1088, serine 1090, serine 1124, and serine 1134. 2 WD repeats span residues 1130–1170 (SRPD…KQLY) and 1217–1256 (LFGIAADVLKYCPFEDIMGSEGDQSSIRLFCERCGELITN). An RING-type; degenerate zinc finger spans residues 1294–1336 (CVLCERPLKKLTMVILPCGHEGHFQCIQEWFLDENEQECPGGC).

It belongs to the WD repeat RTC1 family.

It localises to the vacuole. In terms of biological role, may be involved in a process influencing telomere capping. This is Restriction of telomere capping protein 1 (RTC1) from Saccharomyces cerevisiae (strain JAY291) (Baker's yeast).